We begin with the raw amino-acid sequence, 146 residues long: Snaclec mamushigin subunit beta (146 aa).

A signal peptide spans 1 to 23 (MGRFIFLSFGLLVVFVSLSGTGA). 3 disulfide bridges follow: Cys25-Cys36, Cys53-Cys142, and Cys119-Cys134. A C-type lectin domain is found at 32–143 (YEGHCYRVFQ…CSRTYNVVCK (112 aa)).

Heterodimer of subunits alpha and beta; disulfide-linked. In terms of tissue distribution, expressed by the venom gland.

It is found in the secreted. Functionally, binds to platelet GPIbalpha (GP1BA) and enhances platelet aggregation at low-shear stress. At high-shear stress, blocks platelet aggregation in a dose-dependent manner. The polypeptide is Snaclec mamushigin subunit beta (Gloydius blomhoffii (Mamushi)).